The chain runs to 102 residues: Large ribosomal subunit protein bL21 (102 aa).

Belongs to the bacterial ribosomal protein bL21 family. As to quaternary structure, part of the 50S ribosomal subunit. Contacts protein L20.

In terms of biological role, this protein binds to 23S rRNA in the presence of protein L20. This chain is Large ribosomal subunit protein bL21, found in Limosilactobacillus fermentum (strain NBRC 3956 / LMG 18251) (Lactobacillus fermentum).